A 1116-amino-acid polypeptide reads, in one-letter code: cGMP-specific 3',5'-cyclic phosphodiesterase (1116 aa).

Disordered regions lie at residues 1-36 and 82-136; these read MTDV…NGAA and KSEC…ATQQ. The segment covering 15–28 has biased composition (low complexity); it reads VSSTSSEVAVETTS. Positions 86–136 are enriched in polar residues; it reads HSQSNNNQHVETAPSKQSSDSEASAPTTVSIPSANAKINSSSSGKTTATQQ. GAF domains are found at residues 241–393 and 425–611; these read DIDV…GIGI and NLEC…GLGI. The region spanning 641 to 964 is the PDEase domain; that stretch reads SQDQTEKLAQ…RNWQDLAEKV (324 aa). Residue His717 is the Proton donor of the active site. Positions 721, 757, 758, and 868 each coordinate a divalent metal cation. Disordered regions lie at residues 1005–1031 and 1067–1116; these read QHGG…LSIK and HVSE…CALL. Basic and acidic residues-rich tracts occupy residues 1014 to 1023 and 1067 to 1076; these read EDTHTPEHQR and HVSEDMDDKS. Low complexity predominate over residues 1085–1103; that stretch reads SGSVGRMSASSSTSSAGTV. Basic residues predominate over residues 1106–1116; sequence SKKRSKLCALL. The residue at position 1113 (Cys1113) is a Cysteine methyl ester. The S-farnesyl cysteine moiety is linked to residue Cys1113. Residues 1114 to 1116 constitute a propeptide, removed in mature form; that stretch reads ALL.

This sequence belongs to the cyclic nucleotide phosphodiesterase family. In terms of assembly, interacts with PrBP. A divalent metal cation is required as a cofactor.

Its subcellular location is the cell membrane. The catalysed reaction is 3',5'-cyclic GMP + H2O = GMP + H(+). Has a role regulating cGMP transport in Malpighian tubule principal cells. This chain is cGMP-specific 3',5'-cyclic phosphodiesterase, found in Drosophila mojavensis (Fruit fly).